Reading from the N-terminus, the 1183-residue chain is Atrophin-1 (1183 aa).

3 disordered regions span residues 1–603, 617–760, and 780–855; these read MKTR…ITTS, SPAG…ARFN, and LEGS…HRPP. Positions 16 to 32 match the Nuclear localization signal motif; it reads RKKEAPGPREELRSRGR. The span at 17 to 29 shows a compositional bias: basic and acidic residues; it reads KKEAPGPREELRS. Serine 34 bears the Phosphoserine mark. Basic and acidic residues predominate over residues 45 to 63; sequence GKAEKSRQTAKKARVEETS. Serine 77, serine 79, serine 100, serine 102, and serine 106 each carry phosphoserine. A compositionally biased stretch (basic and acidic residues) spans 107-127; it reads LDGRSINDDGSSDPRDIDQDN. Residues 128 to 151 are compositionally biased toward polar residues; sequence RSTSPSIYSPGSVENDSDSSSGLS. 2 stretches are compositionally biased toward pro residues: residues 157 to 173 and 207 to 218; these read PYHP…PPDS and GPPPGAPPPHPQ. Over residues 261–272 the composition is skewed to low complexity; it reads IPISSSGASGAP. A compositionally biased stretch (pro residues) spans 344–373; it reads PPGPEKGPTLAPSPHPLPPASSSAPGPPMR. Positions 377-400 are enriched in low complexity; it reads SSCSSSSVAASSSSSAATSQYPAS. The segment covering 415-436 has biased composition (polar residues); the sequence is SMSVSNQPPKYTQPSLPSQAVW. Residues 510–560 are involved in binding BAIAP2; it reads HPLESSNSHHAHPYNMSPSLGSLRPYPPGPAHLPPSHGQVSYSQAGPNGPP. Positions 562–584 are enriched in low complexity; sequence SSSSNSSGSSSQAAYSCSHPSSS. A Phosphoserine modification is found at serine 625. Lysine 634 carries the N6-acetyllysine modification. A Phosphothreonine modification is found at threonine 646. A Phosphoserine modification is found at serine 654. At threonine 662 the chain carries Phosphothreonine. 2 stretches are compositionally biased toward pro residues: residues 701–711 and 732–745; these read LPPPPAAPTTG and SPVP…PPPK. A Phosphoserine; by MAPK8 modification is found at serine 732. Residues serine 739 and serine 741 each carry the phosphoserine modification. A compositionally biased stretch (basic and acidic residues) spans 788–832; it reads KRADLVEKVRREAEQRAREEKEREREREREKEREREKERELERSV. The tract at residues 872-887 is required for interaction with FAT1; that stretch reads DTPALRTLSEYARPHV. Residue serine 889 is modified to Phosphoserine. The disordered stretch occupies residues 921–940; that stretch reads PAAREREREARERDLRDRLK. The span at 922–940 shows a compositional bias: basic and acidic residues; sequence AAREREREARERDLRDRLK. Residues 1026-1034 carry the Nuclear export signal motif; it reads ALGNDPLAR. Arginine 1108 carries the asymmetric dimethylarginine modification. Residue lysine 1176 forms a Glycyl lysine isopeptide (Lys-Gly) (interchain with G-Cter in SUMO2) linkage.

As to quaternary structure, interacts with NR2E1; the interaction represses the transcriptional activity of NR2E1. Interact (via its N-terminus) with FAT1 (via a C-terminal domain). Interacts with BAIAP2, WWP1, WWP2, WWP3 and RERE. Interacts (via its N-terminus) with MTG8; the interaction enhances transcriptional repression of MTG8. Interacts with PQBP1. In terms of processing, phosphorylated in vitro by MAPK8/JNK1 on Ser-732. Predominant neuronal expression, Expressed in most brain regions including striatum, hippocampus, cerebral cortex, diencephalon, brain stem and cerebellum. Highest levels in cerebellum. Also highly expressed in kidney and testis, low expression in skeletal muscle and heart.

Its subcellular location is the nucleus. It is found in the cytoplasm. It localises to the perinuclear region. The protein localises to the cell junction. Transcriptional corepressor. Recruits NR2E1 to repress transcription. Promotes vascular smooth cell (VSMC) migration and orientation. Corepressor of MTG8 transcriptional repression. Has some intrinsic repression activity. The protein is Atrophin-1 (Atn1) of Rattus norvegicus (Rat).